The following is a 320-amino-acid chain: ATP-dependent 6-phosphofructokinase (320 aa).

Residue G12 participates in ATP binding. ADP is bound by residues 22 to 26 (RGVVR) and 55 to 60 (RYSVSD). Residues 73 to 74 (RF) and 103 to 106 (GDGS) each bind ATP. Mg(2+) is bound at residue D104. 126–128 (TID) contacts substrate. D128 serves as the catalytic Proton acceptor. R155 provides a ligand contact to ADP. Substrate-binding positions include R163 and 170-172 (MGR). ADP-binding positions include 186–188 (GCE), K212, and 214–216 (KKH). Substrate-binding positions include E223, R244, and 250–253 (HIQR).

It belongs to the phosphofructokinase type A (PFKA) family. ATP-dependent PFK group I subfamily. Prokaryotic clade 'B1' sub-subfamily. Homotetramer. Mg(2+) is required as a cofactor.

It is found in the cytoplasm. It carries out the reaction beta-D-fructose 6-phosphate + ATP = beta-D-fructose 1,6-bisphosphate + ADP + H(+). It participates in carbohydrate degradation; glycolysis; D-glyceraldehyde 3-phosphate and glycerone phosphate from D-glucose: step 3/4. With respect to regulation, allosterically activated by ADP and other diphosphonucleosides, and allosterically inhibited by phosphoenolpyruvate. Functionally, catalyzes the phosphorylation of D-fructose 6-phosphate to fructose 1,6-bisphosphate by ATP, the first committing step of glycolysis. The protein is ATP-dependent 6-phosphofructokinase of Enterobacter cloacae.